We begin with the raw amino-acid sequence, 355 residues long: Beta-1,2-mannobiose phosphorylase (355 aa).

Beta-D-Manp-(1-&gt;2)-beta-D-Manp-(1-&gt;2)-D-Manp-binding positions include Asn-31, Arg-46, Arg-89, 140–141 (ED), Lys-188, Tyr-273, and Asp-333.

The protein belongs to the glycosyl hydrolase 130 family. In terms of assembly, homodimer.

It carries out the reaction beta-D-mannopyranosyl-(1-&gt;2)-D-mannopyranose + phosphate = alpha-D-mannose 1-phosphate + D-mannose. In terms of biological role, catalyzes the reversible phosphorolysis of 1,2-beta-oligomannan. In phosphorolytic reactions, prefers beta-1,2-mannobiose (beta-1,2-Man2) as substrate, but can also use beta-1,2-mannotriose. In Listeria innocua serovar 6a (strain ATCC BAA-680 / CLIP 11262), this protein is Beta-1,2-mannobiose phosphorylase.